We begin with the raw amino-acid sequence, 723 residues long: Polyribonucleotide nucleotidyltransferase (723 aa).

Residues aspartate 488 and aspartate 494 each coordinate Mg(2+). The KH domain occupies 555–614 (PKIITLNIKPEKIKDVIGPGGKQINAIIDETGVKIDIEQDGTVYIASQDQAMNRKAIAII). The 69-residue stretch at 624-692 (GEVYTGKVRR…QQGRVNLSRK (69 aa)) folds into the S1 motif domain. Residues 692–723 (KALLEKKEQPEGDKKPQAEKKFYPKTKKPESK) are disordered. Over residues 693–723 (ALLEKKEQPEGDKKPQAEKKFYPKTKKPESK) the composition is skewed to basic and acidic residues.

It belongs to the polyribonucleotide nucleotidyltransferase family. Mg(2+) serves as cofactor.

The protein resides in the cytoplasm. The catalysed reaction is RNA(n+1) + phosphate = RNA(n) + a ribonucleoside 5'-diphosphate. Functionally, involved in mRNA degradation. Catalyzes the phosphorolysis of single-stranded polyribonucleotides processively in the 3'- to 5'-direction. The protein is Polyribonucleotide nucleotidyltransferase of Listeria monocytogenes serovar 1/2a (strain ATCC BAA-679 / EGD-e).